The primary structure comprises 104 residues: Evasin P1174 (104 aa).

Residues 1 to 27 (LKTFCLFLQIAVFIALGIQIFLCGTDA) form the signal peptide. Cystine bridges form between C40/C59, C44/C61, and C55/C72. N43, N49, and N58 each carry an N-linked (GlcNAc...) asparagine glycan. Residues 85–104 (KPTSEEIADASPRPKETNSH) form a disordered region.

The protein localises to the secreted. Salivary chemokine-binding protein which binds to host chemokines CXCL1 and CXCL8. The protein is Evasin P1174 of Ixodes ricinus (Common tick).